A 58-amino-acid polypeptide reads, in one-letter code: Small ribosomal subunit protein bS21 (58 aa).

The segment covering 32 to 42 has biased composition (basic and acidic residues); it reads IRKREHYEKPS. A disordered region spans residues 32-58; that stretch reads IRKREHYEKPSVKRKKKSEAARKRKFK. The segment covering 43–58 has biased composition (basic residues); it reads VKRKKKSEAARKRKFK.

This sequence belongs to the bacterial ribosomal protein bS21 family.

The sequence is that of Small ribosomal subunit protein bS21 from Lachnoclostridium phytofermentans (strain ATCC 700394 / DSM 18823 / ISDg) (Clostridium phytofermentans).